The sequence spans 54 residues: Photosystem II reaction center protein L (54 aa).

The helical transmembrane segment at 33 to 53 (SLFWGLLLIFVLAVLFSSYIF) threads the bilayer.

This sequence belongs to the PsbL family. In terms of assembly, PSII is composed of 1 copy each of membrane proteins PsbA, PsbB, PsbC, PsbD, PsbE, PsbF, PsbH, PsbI, PsbJ, PsbK, PsbL, PsbM, PsbT, PsbX, PsbY, PsbZ, Psb30/Ycf12, at least 3 peripheral proteins of the oxygen-evolving complex and a large number of cofactors. It forms dimeric complexes.

The protein resides in the plastid. It is found in the chloroplast thylakoid membrane. One of the components of the core complex of photosystem II (PSII). PSII is a light-driven water:plastoquinone oxidoreductase that uses light energy to abstract electrons from H(2)O, generating O(2) and a proton gradient subsequently used for ATP formation. It consists of a core antenna complex that captures photons, and an electron transfer chain that converts photonic excitation into a charge separation. This subunit is found at the monomer-monomer interface and is required for correct PSII assembly and/or dimerization. The sequence is that of Photosystem II reaction center protein L from Stigeoclonium helveticum (Green alga).